Consider the following 311-residue polypeptide: Methionyl-tRNA formyltransferase (311 aa).

110–113 (SLLP) serves as a coordination point for (6S)-5,6,7,8-tetrahydrofolate.

It belongs to the Fmt family.

It carries out the reaction L-methionyl-tRNA(fMet) + (6R)-10-formyltetrahydrofolate = N-formyl-L-methionyl-tRNA(fMet) + (6S)-5,6,7,8-tetrahydrofolate + H(+). Attaches a formyl group to the free amino group of methionyl-tRNA(fMet). The formyl group appears to play a dual role in the initiator identity of N-formylmethionyl-tRNA by promoting its recognition by IF2 and preventing the misappropriation of this tRNA by the elongation apparatus. This Streptococcus agalactiae serotype Ia (strain ATCC 27591 / A909 / CDC SS700) protein is Methionyl-tRNA formyltransferase.